The sequence spans 191 residues: Protein LURP-one-related 6 (191 aa).

The protein belongs to the LOR family.

Might be related to the phospholipid scramblase and tubby-like superfamily of membrane tethered transcription factors. This Arabidopsis thaliana (Mouse-ear cress) protein is Protein LURP-one-related 6.